Reading from the N-terminus, the 709-residue chain is Polyribonucleotide nucleotidyltransferase (709 aa).

Mg(2+) is bound by residues Asp-487 and Asp-493. The KH domain maps to 554 to 613 (PRIHTMKISSDKIKDVIGKGGAVIRALCEETGTTIEIEDDGTIKIAATEGAAAKEAIRRI). Residues 623-691 (GKIYPGKVMR…RQGRIRLSIK (69 aa)) enclose the S1 motif domain.

Belongs to the polyribonucleotide nucleotidyltransferase family. Component of the RNA degradosome, which is a multiprotein complex involved in RNA processing and mRNA degradation. It depends on Mg(2+) as a cofactor.

It is found in the cytoplasm. It carries out the reaction RNA(n+1) + phosphate = RNA(n) + a ribonucleoside 5'-diphosphate. In terms of biological role, involved in mRNA degradation. Catalyzes the phosphorolysis of single-stranded polyribonucleotides processively in the 3'- to 5'-direction. The polypeptide is Polyribonucleotide nucleotidyltransferase (Aliivibrio salmonicida (strain LFI1238) (Vibrio salmonicida (strain LFI1238))).